A 174-amino-acid polypeptide reads, in one-letter code: Serine protease 2 (174 aa).

A disulfide bridge links Cys-15 with Cys-36. Catalysis depends on charge relay system residues His-35, Asp-65, and Ser-147. Cys-141 and Cys-168 form a disulfide bridge.

The protein belongs to the peptidase S1 family.

Its subcellular location is the secreted. Broad substrate specificity. The sequence is that of Serine protease 2 from Streptomyces fradiae (Streptomyces roseoflavus).